A 516-amino-acid chain; its full sequence is Lysophosphatidylcholine acyltransferase 2B (516 aa).

Residue Asn28 is glycosylated (N-linked (GlcNAc...) asparagine). Transmembrane regions (helical) follow at residues 44 to 64 (THLS…LVPV), 68 to 88 (CIVF…INLP), and 102 to 122 (LIKS…GFLV). The short motif at 142 to 147 (HSTFFD) is the HXXXXD motif element. EF-hand domains follow at residues 387 to 422 (PISE…LCNP) and 424 to 459 (NTEK…AFGV). The Ca(2+) site is built by Asp400, Asn402, Asp404, Thr406, Glu411, Asp437, Asp439, Asp441, Tyr443, and Glu448.

The protein belongs to the 1-acyl-sn-glycerol-3-phosphate acyltransferase family.

It is found in the membrane. It functions in the pathway lipid metabolism; phospholipid metabolism. Probable acetyltransferase. The chain is Lysophosphatidylcholine acyltransferase 2B (Lpcat2b) from Mus musculus (Mouse).